Here is a 329-residue protein sequence, read N- to C-terminus: Gamma-resorcylate decarboxylase (329 aa).

Residues Glu8, His10, His167, and Asp290 each coordinate Zn(2+). The active site involves Asp290.

Belongs to the metallo-dependent hydrolases superfamily. ACMSD family. Requires Zn(2+) as cofactor.

The enzyme catalyses 2,6-dihydroxybenzoate + H(+) = resorcinol + CO2. It participates in aromatic compound metabolism. Its function is as follows. Involved in the gamma-resorcylate (2,6-dihydroxybenzoate) catabolism. Catalyzes the reversible decarboxylation of gamma-resorcylate to resorcinol. This is Gamma-resorcylate decarboxylase from Rhodococcus jostii (strain RHA1).